The following is a 38-amino-acid chain: Non-specific lipid-transfer protein P2 (38 aa).

Belongs to the plant LTP family.

The protein resides in the secreted. Its function is as follows. Plant non-specific lipid-transfer proteins transfer phospholipids as well as galactolipids across membranes. May play a role in wax or cutin deposition in the cell walls of expanding epidermal cells and certain secretory tissues. The polypeptide is Non-specific lipid-transfer protein P2 (Vitis sp. (Grape)).